The following is a 200-amino-acid chain: MELQVVGANALTVSETTFGREFNEALIHQVVVAYAAGARQGSRAQKTRAEVSGSGKKPWRQKGTGRARSGDIKSPIWRSGGITFAAKPQDHSQKVNKKMYRGAIKSILSELVRQERLVVVEKFEIEAPKTKVLVQKLKDLALNDALIITANLDENLFLAARNLYKVDVRDVQGIDPVSLIAFDKVVITADAVKQIEEMLA.

The segment at 43–71 (RAQKTRAEVSGSGKKPWRQKGTGRARSGD) is disordered.

Belongs to the universal ribosomal protein uL4 family. Part of the 50S ribosomal subunit.

One of the primary rRNA binding proteins, this protein initially binds near the 5'-end of the 23S rRNA. It is important during the early stages of 50S assembly. It makes multiple contacts with different domains of the 23S rRNA in the assembled 50S subunit and ribosome. Its function is as follows. Forms part of the polypeptide exit tunnel. In Actinobacillus pleuropneumoniae serotype 5b (strain L20), this protein is Large ribosomal subunit protein uL4.